A 229-amino-acid polypeptide reads, in one-letter code: GTP-binding protein Di-Ras3 (229 aa).

Residues 44 to 51 (GTAGVGKS), 63 to 69 (RHEYLPT), 91 to 95 (DSKSG), 152 to 155 (NKSD), and 182 to 183 (AK) each bind GTP. An Effector region motif is present at residues 66 to 74 (YLPTIENTY). Position 226 is a cysteine methyl ester (cysteine 226). The S-geranylgeranyl cysteine moiety is linked to residue cysteine 226. The propeptide at 227–229 (IIM) is removed in mature form.

The protein belongs to the small GTPase superfamily. Di-Ras family. As to expression, expressed in normal ovarian and breast epithelial cells but not in ovarian and breast cancers.

It localises to the cell membrane. The polypeptide is GTP-binding protein Di-Ras3 (DIRAS3) (Homo sapiens (Human)).